Here is a 262-residue protein sequence, read N- to C-terminus: Small ribosomal subunit protein uS2 (262 aa).

This sequence belongs to the universal ribosomal protein uS2 family.

This Borreliella afzelii (strain PKo) (Borrelia afzelii) protein is Small ribosomal subunit protein uS2.